A 206-amino-acid chain; its full sequence is Large ribosomal subunit protein uL4 (206 aa).

A disordered region spans residues 47–77 (TRAQKGRSDVTGSTRKQWRQKGTGRARTGAA).

Belongs to the universal ribosomal protein uL4 family. Part of the 50S ribosomal subunit.

In terms of biological role, one of the primary rRNA binding proteins, this protein initially binds near the 5'-end of the 23S rRNA. It is important during the early stages of 50S assembly. It makes multiple contacts with different domains of the 23S rRNA in the assembled 50S subunit and ribosome. Forms part of the polypeptide exit tunnel. This Nitrosomonas europaea (strain ATCC 19718 / CIP 103999 / KCTC 2705 / NBRC 14298) protein is Large ribosomal subunit protein uL4.